Consider the following 739-residue polypeptide: MASIMEGPLSKWTNVMKGWQYRWFVLDYNAGLLSYYTSKDKMMRGSRRGCVRLRGAVIGIDDEDDSTFTITVDQKTFHFQARDADEREKWIHALEETILRHTLQIQQGLDSGFVPSVQDFDKKLAESDAYLQILIDQIKLFDDKIQSCKDDEQRKKIEDLKDTTCSMVESIKHCIVLLQIAKDQTNEEKHADGFISTINPVDSIYQPSALESVVIPTMPTQASPVPESVQVCKGEPRPSSLAVGPVVSNLGSRQSPTPISTGSGQSAPSSSLTSPSHVNLSPNTVPDFSYSSSEDEFYDADEFYQSSTSPKRCMDSSESATALTHSSTGASLKRPDTTESLNSSMSNGTNEAEQFDTHDDRDDDGEGESVEEHKSVIMHLLSQVRLGMDLTKVVLPTFILERRSLLEMYADFFAHPDLFVSIGEHKDPKDRMAQVVKWYLSAFHAGRKGSVAKKPYNPILGEVFQCHWALPGLENDENPEAVSEGPIPWASKNNVTFVAEQVSHHPPISAFYAECYNKRIQFNAHIWTKSKFLGMSIGVHNIGQGCVSCLDYDEHYILTFPNGYGRSILTVPWVELGGECTINCSKTGYNATITFHTKPFYGGKKHRVTAEIYSPNDKKPFCSIEGEWNGIMYAKNANGENTVFIDTKKMPTVKKKVRKLEDQEEYESRRMWKDVTFNLKIKDIDAATEAKHRLEEKQRAEARERKEKEKQWETRLFHEDGECWVYDEPLLKREPSLRY.

The PH domain occupies 2 to 99 (ASIMEGPLSK…WIHALEETIL (98 aa)). Disordered stretches follow at residues 220–292 (TQAS…SYSS) and 306–371 (SSTS…ESVE). Polar residues predominate over residues 249 to 259 (NLGSRQSPTPI). Positions 260 to 276 (STGSGQSAPSSSLTSPS) are enriched in low complexity. Polar residues-rich tracts occupy residues 277–292 (HVNL…SYSS), 306–330 (SSTS…STGA), and 338–352 (TESL…TNEA).

This sequence belongs to the OSBP family.

The catalysed reaction is a 1,2-diacyl-sn-glycero-3-phospho-(1D-myo-inositol 4-phosphate)(out) + a 1,2-diacyl-sn-glycero-3-phospho-L-serine(in) = a 1,2-diacyl-sn-glycero-3-phospho-(1D-myo-inositol 4-phosphate)(in) + a 1,2-diacyl-sn-glycero-3-phospho-L-serine(out). In terms of biological role, interacts with OSBPL11 to function as lipid transfer proteins. Together they form a heterodimer that localizes at the ER-trans-Golgi membrane contact sites, and exchanges phosphatidylserine (1,2-diacyl-sn-glycero-3-phospho-L-serine, PS) for phosphatidylinositol-4-phosphate (1,2-diacyl-sn-glycero-3-phospho-(1D-myo-inositol 4-phosphate), PI(4)P) between the two organelles, a step that is critical for sphingomyelin synthesis in the Golgi complex. The polypeptide is Oxysterol-binding protein-related protein 9 (osbpl9) (Xenopus tropicalis (Western clawed frog)).